Reading from the N-terminus, the 291-residue chain is Light-independent protochlorophyllide reductase iron-sulfur ATP-binding protein (291 aa).

ATP-binding positions include 10–15 (GIGKST) and Lys-39. Ser-14 contacts Mg(2+). [4Fe-4S] cluster is bound by residues Cys-95 and Cys-129. 180 to 181 (NR) contacts ATP.

Belongs to the NifH/BchL/ChlL family. As to quaternary structure, homodimer. Protochlorophyllide reductase is composed of three subunits; ChlL, ChlN and ChlB. Requires [4Fe-4S] cluster as cofactor.

The protein resides in the plastid. It is found in the chloroplast. It catalyses the reaction chlorophyllide a + oxidized 2[4Fe-4S]-[ferredoxin] + 2 ADP + 2 phosphate = protochlorophyllide a + reduced 2[4Fe-4S]-[ferredoxin] + 2 ATP + 2 H2O. The protein operates within porphyrin-containing compound metabolism; chlorophyll biosynthesis (light-independent). Component of the dark-operative protochlorophyllide reductase (DPOR) that uses Mg-ATP and reduced ferredoxin to reduce ring D of protochlorophyllide (Pchlide) to form chlorophyllide a (Chlide). This reaction is light-independent. The L component serves as a unique electron donor to the NB-component of the complex, and binds Mg-ATP. This Pinus thunbergii (Japanese black pine) protein is Light-independent protochlorophyllide reductase iron-sulfur ATP-binding protein.